The following is a 147-amino-acid chain: UPF0735 ACT domain-containing protein BH1214 (147 aa).

In terms of domain architecture, ACT spans 70–145 (TLSINLEDRS…AVEKVELVGS (76 aa)).

The protein belongs to the UPF0735 family.

This Halalkalibacterium halodurans (strain ATCC BAA-125 / DSM 18197 / FERM 7344 / JCM 9153 / C-125) (Bacillus halodurans) protein is UPF0735 ACT domain-containing protein BH1214.